The following is a 558-amino-acid chain: Pyrethroid hydrolase Ces2a (558 aa).

A signal peptide spans 1-26 (MPLARLPGWLCVVACGLLLLLQHVHG). A disulfide bridge connects residues C95 and C122. At K209 the chain carries N6-succinyllysine. S227 (acyl-ester intermediate) is an active-site residue. Residue N275 is glycosylated (N-linked (GlcNAc...) asparagine). A disulfide bond links C279 and C290. K296 bears the N6-succinyllysine mark. Catalysis depends on E344, which acts as the Charge relay system. N361 is a glycosylation site (N-linked (GlcNAc...) asparagine). H456 acts as the Charge relay system in catalysis.

The protein belongs to the type-B carboxylesterase/lipase family.

It is found in the microsome. The enzyme catalyses (-)-trans-permethrin + H2O = (3-phenoxyphenyl)methanol + (1S,3R)-3-(2,2-dichlorovinyl)-2,2-dimethylcyclopropanecarboxylate + H(+). It carries out the reaction all-trans-retinyl hexadecanoate + H2O = all-trans-retinol + hexadecanoate + H(+). Carboxylesterases that catalyzes the hydrolysis of pyrethroids pesticides. Hydrolyzes permethrin faster than cypermethrin. Hydrolyzes retinyl esters. The protein is Pyrethroid hydrolase Ces2a of Mus musculus (Mouse).